The chain runs to 300 residues: Epimerase family protein SAR0825 (300 aa).

It belongs to the NAD(P)-dependent epimerase/dehydratase family. SDR39U1 subfamily.

This is Epimerase family protein SAR0825 from Staphylococcus aureus (strain MRSA252).